The following is a 574-amino-acid chain: Putative ABC transporter ATP-binding protein VV2_1533 (574 aa).

ABC transporter domains lie at Ile-3–Glu-244 and Leu-299–Thr-533. Residues Gly-37–Ser-44 and Gly-332–Ser-339 each bind ATP.

Belongs to the ABC transporter superfamily.

It localises to the cell inner membrane. Functionally, probably part of an ABC transporter complex. Responsible for energy coupling to the transport system. In Vibrio vulnificus (strain CMCP6), this protein is Putative ABC transporter ATP-binding protein VV2_1533.